Here is a 217-residue protein sequence, read N- to C-terminus: 25 kDa ookinete surface antigen (217 aa).

A signal peptide spans 1-16 (MNKLYSLFLFLFIQLS). One can recognise an EGF-like 1; truncated domain in the interval 30–59 (CKKGFLIQMSGHLECKCENDLVLVNEETCE). 3 EGF-like domains span residues 61–106 (KVLK…NVCI), 106–150 (ILNE…NKCS), and 153–193 (GETK…STCT). Cystine bridges form between Cys-65/Cys-80, Cys-74/Cys-92, Cys-94/Cys-105, Cys-110/Cys-120, Cys-115/Cys-133, Cys-135/Cys-149, Cys-157/Cys-168, Cys-161/Cys-177, and Cys-179/Cys-192. Residue Asn-112 is glycosylated (N-linked (GlcNAc...) asparagine). 2 N-linked (GlcNAc...) asparagine glycosylation sites follow: Asn-165 and Asn-187. Ser-196 carries the GPI-anchor amidated serine lipid modification. Residues 197 to 217 (VYNILNLSLIFVLFSVCFFIM) constitute a propeptide, removed in mature form. Asn-202 carries N-linked (GlcNAc...) asparagine glycosylation.

The protein localises to the cell membrane. In Plasmodium reichenowi, this protein is 25 kDa ookinete surface antigen.